A 156-amino-acid chain; its full sequence is Transcription elongation factor GreA (156 aa).

Residues 44–67 (ENAEYEAAKEKQAMIEGRIQDLCQ) are a coiled coil.

Belongs to the GreA/GreB family.

Necessary for efficient RNA polymerase transcription elongation past template-encoded arresting sites. The arresting sites in DNA have the property of trapping a certain fraction of elongating RNA polymerases that pass through, resulting in locked ternary complexes. Cleavage of the nascent transcript by cleavage factors such as GreA or GreB allows the resumption of elongation from the new 3'terminus. GreA releases sequences of 2 to 3 nucleotides. The chain is Transcription elongation factor GreA from Syntrophobacter fumaroxidans (strain DSM 10017 / MPOB).